The primary structure comprises 465 residues: Chaperone protein dnaJ C76, chloroplastic (465 aa).

Residues 1 to 38 constitute a chloroplast transit peptide; that stretch reads MTPAIFSPTTLPPSTATWPCSTSQKLITVRSPLKFKCR. The J domain maps to 50 to 113; that stretch reads DLYDLLGIDR…ISRQAYDKEQ (64 aa). The interval 346–385 is disordered; that stretch reads AALPSSGNNNGSKASSNPQVTRKTFPSEEKPTSRRENRRQ. Residues 350 to 362 show a composition bias toward low complexity; sequence SSGNNNGSKASSN. Positions 370-384 are enriched in basic and acidic residues; that stretch reads FPSEEKPTSRRENRR.

Belongs to the DnaJ family. As to expression, expressed in roots, exclusively in the stele.

The protein resides in the plastid. It is found in the chloroplast. Functionally, may function together with HSC70 chaperone to assist protein folding and prevent protein aggregation during salt stress in the chloroplast. Involved in root development. Required for the position-dependent cell fate determination during root hair development. The chain is Chaperone protein dnaJ C76, chloroplastic from Arabidopsis thaliana (Mouse-ear cress).